A 276-amino-acid chain; its full sequence is 4-hydroxy-3-methylbut-2-enyl diphosphate reductase (276 aa).

Residue Cys12 participates in [4Fe-4S] cluster binding. Residues His36 and His70 each contribute to the (2E)-4-hydroxy-3-methylbut-2-enyl diphosphate site. Dimethylallyl diphosphate-binding residues include His36 and His70. Isopentenyl diphosphate is bound by residues His36 and His70. Residue Cys92 coordinates [4Fe-4S] cluster. His120 lines the (2E)-4-hydroxy-3-methylbut-2-enyl diphosphate pocket. Dimethylallyl diphosphate is bound at residue His120. Position 120 (His120) interacts with isopentenyl diphosphate. The active-site Proton donor is the Glu122. (2E)-4-hydroxy-3-methylbut-2-enyl diphosphate is bound at residue Thr158. Cys186 contributes to the [4Fe-4S] cluster binding site. 4 residues coordinate (2E)-4-hydroxy-3-methylbut-2-enyl diphosphate: Ser214, Ser215, Asn216, and Ser258. Ser214, Ser215, Asn216, and Ser258 together coordinate dimethylallyl diphosphate. Positions 214, 215, 216, and 258 each coordinate isopentenyl diphosphate.

Belongs to the IspH family. The cofactor is [4Fe-4S] cluster.

It catalyses the reaction isopentenyl diphosphate + 2 oxidized [2Fe-2S]-[ferredoxin] + H2O = (2E)-4-hydroxy-3-methylbut-2-enyl diphosphate + 2 reduced [2Fe-2S]-[ferredoxin] + 2 H(+). It carries out the reaction dimethylallyl diphosphate + 2 oxidized [2Fe-2S]-[ferredoxin] + H2O = (2E)-4-hydroxy-3-methylbut-2-enyl diphosphate + 2 reduced [2Fe-2S]-[ferredoxin] + 2 H(+). It functions in the pathway isoprenoid biosynthesis; dimethylallyl diphosphate biosynthesis; dimethylallyl diphosphate from (2E)-4-hydroxy-3-methylbutenyl diphosphate: step 1/1. The protein operates within isoprenoid biosynthesis; isopentenyl diphosphate biosynthesis via DXP pathway; isopentenyl diphosphate from 1-deoxy-D-xylulose 5-phosphate: step 6/6. In terms of biological role, catalyzes the conversion of 1-hydroxy-2-methyl-2-(E)-butenyl 4-diphosphate (HMBPP) into a mixture of isopentenyl diphosphate (IPP) and dimethylallyl diphosphate (DMAPP). Acts in the terminal step of the DOXP/MEP pathway for isoprenoid precursor biosynthesis. The chain is 4-hydroxy-3-methylbut-2-enyl diphosphate reductase from Wolinella succinogenes (strain ATCC 29543 / DSM 1740 / CCUG 13145 / JCM 31913 / LMG 7466 / NCTC 11488 / FDC 602W) (Vibrio succinogenes).